A 444-amino-acid chain; its full sequence is ATP-dependent protease ATPase subunit HslU (444 aa).

ATP contacts are provided by residues I20 and 62-67; that span reads GVGKTE. Positions 137–162 are disordered; sequence LVPPSRGTSGEPERGEDSNARQTFRK. The ATP site is built by D257, E322, and R394.

This sequence belongs to the ClpX chaperone family. HslU subfamily. In terms of assembly, a double ring-shaped homohexamer of HslV is capped on each side by a ring-shaped HslU homohexamer. The assembly of the HslU/HslV complex is dependent on binding of ATP.

The protein localises to the cytoplasm. Its function is as follows. ATPase subunit of a proteasome-like degradation complex; this subunit has chaperone activity. The binding of ATP and its subsequent hydrolysis by HslU are essential for unfolding of protein substrates subsequently hydrolyzed by HslV. HslU recognizes the N-terminal part of its protein substrates and unfolds these before they are guided to HslV for hydrolysis. In Bordetella petrii (strain ATCC BAA-461 / DSM 12804 / CCUG 43448), this protein is ATP-dependent protease ATPase subunit HslU.